A 137-amino-acid chain; its full sequence is Fatty acid-binding protein homolog 8 (137 aa).

The short motif at 24 to 34 (KEIGVGLLIRK) is the Nuclear localization signal element.

It belongs to the calycin superfamily. Fatty-acid binding protein (FABP) family. In terms of assembly, monomer. Intestine.

It is found in the lysosome. The protein resides in the nucleus. Its function is as follows. Lysosomal lipid chaperone which binds to a wide range of unsaturated fatty acids, including high affinity binding to oleic acid and oleoylethanolamide, to transport them into the nucleus. As part of a lysosome-to-nucleus retrograde lipid signaling pathway, translocates into the nucleus where it activates the transcription of genes promoting longevity and activation of mitochondrial beta oxidation. This is Fatty acid-binding protein homolog 8 from Caenorhabditis elegans.